Here is a 315-residue protein sequence, read N- to C-terminus: S-methyl-5'-thioadenosine phosphorylase (315 aa).

Residues serine 22, 65 to 66 (RH), and 98 to 99 (SA) contribute to the phosphate site. Substrate is bound at residue methionine 205. Residue serine 206 coordinates phosphate. 229–231 (DYD) serves as a coordination point for substrate.

It belongs to the PNP/MTAP phosphorylase family. MTAP subfamily. In terms of assembly, homotrimer.

The protein resides in the cytoplasm. It localises to the nucleus. The enzyme catalyses S-methyl-5'-thioadenosine + phosphate = 5-(methylsulfanyl)-alpha-D-ribose 1-phosphate + adenine. Its pathway is amino-acid biosynthesis; L-methionine biosynthesis via salvage pathway; S-methyl-5-thio-alpha-D-ribose 1-phosphate from S-methyl-5'-thioadenosine (phosphorylase route): step 1/1. Functionally, catalyzes the reversible phosphorylation of S-methyl-5'-thioadenosine (MTA) to adenine and 5-methylthioribose-1-phosphate. Involved in the breakdown of MTA, a major by-product of polyamine biosynthesis. Responsible for the first step in the methionine salvage pathway after MTA has been generated from S-adenosylmethionine. Has broad substrate specificity with 6-aminopurine nucleosides as preferred substrates. This chain is S-methyl-5'-thioadenosine phosphorylase, found in Mycosarcoma maydis (Corn smut fungus).